The following is a 157-amino-acid chain: Probable chemoreceptor glutamine deamidase CheD (157 aa).

This sequence belongs to the CheD family.

The catalysed reaction is L-glutaminyl-[protein] + H2O = L-glutamyl-[protein] + NH4(+). Probably deamidates glutamine residues to glutamate on methyl-accepting chemotaxis receptors (MCPs), playing an important role in chemotaxis. In Archaeoglobus fulgidus (strain ATCC 49558 / DSM 4304 / JCM 9628 / NBRC 100126 / VC-16), this protein is Probable chemoreceptor glutamine deamidase CheD.